The following is a 361-amino-acid chain: Carbamoyl phosphate synthase small chain (361 aa).

The tract at residues 1-173 (MRAALALEDG…SVREEYRFSD (173 aa)) is CPSase. The L-glutamine site is built by Ser-45, Gly-225, and Gly-227. In terms of domain architecture, Glutamine amidotransferase type-1 spans 177–361 (EIVVIDCGVK…DEFLAMCREH (185 aa)). The active-site Nucleophile is the Cys-252. 5 residues coordinate L-glutamine: Leu-253, Gln-256, Asn-294, Gly-296, and Phe-297. Residues His-337 and Glu-339 contribute to the active site.

The protein belongs to the CarA family. Composed of two chains; the small (or glutamine) chain promotes the hydrolysis of glutamine to ammonia, which is used by the large (or ammonia) chain to synthesize carbamoyl phosphate. Tetramer of heterodimers (alpha,beta)4.

It catalyses the reaction hydrogencarbonate + L-glutamine + 2 ATP + H2O = carbamoyl phosphate + L-glutamate + 2 ADP + phosphate + 2 H(+). The enzyme catalyses L-glutamine + H2O = L-glutamate + NH4(+). The protein operates within amino-acid biosynthesis; L-arginine biosynthesis; carbamoyl phosphate from bicarbonate: step 1/1. Its pathway is pyrimidine metabolism; UMP biosynthesis via de novo pathway; (S)-dihydroorotate from bicarbonate: step 1/3. Its function is as follows. Small subunit of the glutamine-dependent carbamoyl phosphate synthetase (CPSase). CPSase catalyzes the formation of carbamoyl phosphate from the ammonia moiety of glutamine, carbonate, and phosphate donated by ATP, constituting the first step of 2 biosynthetic pathways, one leading to arginine and/or urea and the other to pyrimidine nucleotides. The small subunit (glutamine amidotransferase) binds and cleaves glutamine to supply the large subunit with the substrate ammonia. The sequence is that of Carbamoyl phosphate synthase small chain from Methanopyrus kandleri (strain AV19 / DSM 6324 / JCM 9639 / NBRC 100938).